Here is a 480-residue protein sequence, read N- to C-terminus: ATP synthase subunit beta (480 aa).

Residue 158–165 participates in ATP binding; the sequence is GGAGVGKT.

This sequence belongs to the ATPase alpha/beta chains family. As to quaternary structure, F-type ATPases have 2 components, CF(1) - the catalytic core - and CF(0) - the membrane proton channel. CF(1) has five subunits: alpha(3), beta(3), gamma(1), delta(1), epsilon(1). CF(0) has three main subunits: a(1), b(2) and c(9-12). The alpha and beta chains form an alternating ring which encloses part of the gamma chain. CF(1) is attached to CF(0) by a central stalk formed by the gamma and epsilon chains, while a peripheral stalk is formed by the delta and b chains.

The protein resides in the cell inner membrane. It carries out the reaction ATP + H2O + 4 H(+)(in) = ADP + phosphate + 5 H(+)(out). Produces ATP from ADP in the presence of a proton gradient across the membrane. The catalytic sites are hosted primarily by the beta subunits. The sequence is that of ATP synthase subunit beta from Koribacter versatilis (strain Ellin345).